The following is a 228-amino-acid chain: Cytochrome c oxidase subunit 2 (228 aa).

At 1-26 the chain is on the mitochondrial intermembrane side; that stretch reads MTTWANMNLQDSASPIMEQLIYFHDH. A helical membrane pass occupies residues 27–48; the sequence is ALMIIIMILMVVSYMMIAMVFN. The Mitochondrial matrix segment spans residues 49-62; the sequence is KYINRFLLEGQMIE. A helical membrane pass occupies residues 63–82; sequence LAWTIAPAVILIFIAVPSLR. The Mitochondrial intermembrane segment spans residues 83-228; sequence LLYLMDEINT…FINWILKMNM (146 aa). Residues histidine 161, cysteine 196, glutamate 198, cysteine 200, histidine 204, and methionine 207 each coordinate Cu cation. Position 198 (glutamate 198) interacts with Mg(2+).

This sequence belongs to the cytochrome c oxidase subunit 2 family. Component of the cytochrome c oxidase (complex IV, CIV), a multisubunit enzyme composed of a catalytic core of 3 subunits and several supernumerary subunits. The complex exists as a monomer or a dimer and forms supercomplexes (SCs) in the inner mitochondrial membrane with ubiquinol-cytochrome c oxidoreductase (cytochrome b-c1 complex, complex III, CIII). The cofactor is Cu cation.

It is found in the mitochondrion inner membrane. The enzyme catalyses 4 Fe(II)-[cytochrome c] + O2 + 8 H(+)(in) = 4 Fe(III)-[cytochrome c] + 2 H2O + 4 H(+)(out). In terms of biological role, component of the cytochrome c oxidase, the last enzyme in the mitochondrial electron transport chain which drives oxidative phosphorylation. The respiratory chain contains 3 multisubunit complexes succinate dehydrogenase (complex II, CII), ubiquinol-cytochrome c oxidoreductase (cytochrome b-c1 complex, complex III, CIII) and cytochrome c oxidase (complex IV, CIV), that cooperate to transfer electrons derived from NADH and succinate to molecular oxygen, creating an electrochemical gradient over the inner membrane that drives transmembrane transport and the ATP synthase. Cytochrome c oxidase is the component of the respiratory chain that catalyzes the reduction of oxygen to water. Electrons originating from reduced cytochrome c in the intermembrane space (IMS) are transferred via the dinuclear copper A center (CU(A)) of subunit 2 and heme A of subunit 1 to the active site in subunit 1, a binuclear center (BNC) formed by heme A3 and copper B (CU(B)). The BNC reduces molecular oxygen to 2 water molecules using 4 electrons from cytochrome c in the IMS and 4 protons from the mitochondrial matrix. The sequence is that of Cytochrome c oxidase subunit 2 (COII) from Periplaneta americana (American cockroach).